The sequence spans 406 residues: MPVYQYKARDRQGRLVEATIEAEDLRTAARLLRDRGLFVAEIKEPGKGLQAEVRIPALERGPGLKDLAIFSRQLATMLGAGLTLLQALAILERQTENRKFREILKQVRTDVEGGMAFSEALSKHKIFSRLYVNLVRAGETSGGLDLILDRLASFLEKELELRGKIRSAMTYPVIVFVFAVGVAYFLLTGIVPQFAQILTDLGSELPLLTRFLIAVSDLLRAATLPLLLLAVALFFAYRWYYGTPQGRRVIDRLKLRLPVFGNLNRKTAVARFSRTLALLLSSGVNIVEALDITKGTAGNSVVEEIVEAAKLKIQQGDPLNLTLAQHPFVFPPMVSSMVAIGEETGALDTMLSKVADFYEREVDEAVASLTAAIEPLMIIFLGVIVGMIVAGMFLPLFKIIGTLSVQ.

4 consecutive transmembrane segments (helical) span residues isoleucine 69–leucine 91, tyrosine 171–valine 191, phenylalanine 211–valine 231, and methionine 377–phenylalanine 397.

It belongs to the GSP F family. As to quaternary structure, homotetramer. Interacts with PilB.

It localises to the cell inner membrane. In terms of biological role, essential inner membrane component of the type IV pilus (T4P) that plays a role in surface and host cell adhesion, colonization, biofilm maturation, virulence, and twitching, a form of surface-associated motility facilitated by cycles of extension, adhesion, and retraction of T4P fibers. Controls both pilus assembly and disassembly and plays an important role in PilB localization to the complex and ATPase activity. The chain is Type IV pilus assembly protein PilC from Thermus thermophilus (strain ATCC 27634 / DSM 579 / HB8).